Consider the following 940-residue polypeptide: Isoleucine--tRNA ligase (940 aa).

The 'HIGH' region motif lies at 58–68; it reads PYANGSIHIGH. Glutamate 564 contributes to the L-isoleucyl-5'-AMP binding site. A 'KMSKS' region motif is present at residues 605 to 609; it reads KMSKS. ATP is bound at residue lysine 608. The Zn(2+) site is built by cysteine 903, cysteine 906, cysteine 923, and cysteine 926.

This sequence belongs to the class-I aminoacyl-tRNA synthetase family. IleS type 1 subfamily. Monomer. It depends on Zn(2+) as a cofactor.

It is found in the cytoplasm. It catalyses the reaction tRNA(Ile) + L-isoleucine + ATP = L-isoleucyl-tRNA(Ile) + AMP + diphosphate. Catalyzes the attachment of isoleucine to tRNA(Ile). As IleRS can inadvertently accommodate and process structurally similar amino acids such as valine, to avoid such errors it has two additional distinct tRNA(Ile)-dependent editing activities. One activity is designated as 'pretransfer' editing and involves the hydrolysis of activated Val-AMP. The other activity is designated 'posttransfer' editing and involves deacylation of mischarged Val-tRNA(Ile). In Shewanella oneidensis (strain ATCC 700550 / JCM 31522 / CIP 106686 / LMG 19005 / NCIMB 14063 / MR-1), this protein is Isoleucine--tRNA ligase.